We begin with the raw amino-acid sequence, 417 residues long: Gamma-glutamyl phosphate reductase (417 aa).

Belongs to the gamma-glutamyl phosphate reductase family.

Its subcellular location is the cytoplasm. It carries out the reaction L-glutamate 5-semialdehyde + phosphate + NADP(+) = L-glutamyl 5-phosphate + NADPH + H(+). The protein operates within amino-acid biosynthesis; L-proline biosynthesis; L-glutamate 5-semialdehyde from L-glutamate: step 2/2. Its function is as follows. Catalyzes the NADPH-dependent reduction of L-glutamate 5-phosphate into L-glutamate 5-semialdehyde and phosphate. The product spontaneously undergoes cyclization to form 1-pyrroline-5-carboxylate. The polypeptide is Gamma-glutamyl phosphate reductase (Phocaeicola vulgatus (strain ATCC 8482 / DSM 1447 / JCM 5826 / CCUG 4940 / NBRC 14291 / NCTC 11154) (Bacteroides vulgatus)).